A 148-amino-acid chain; its full sequence is Large ribosomal subunit protein bL9 (148 aa).

It belongs to the bacterial ribosomal protein bL9 family.

Functionally, binds to the 23S rRNA. The polypeptide is Large ribosomal subunit protein bL9 (Bacillus cereus (strain G9842)).